The chain runs to 79 residues: Large ribosomal subunit protein bL31 (79 aa).

Belongs to the bacterial ribosomal protein bL31 family. Type A subfamily. In terms of assembly, part of the 50S ribosomal subunit.

Functionally, binds the 23S rRNA. The sequence is that of Large ribosomal subunit protein bL31 from Nostoc sp. (strain PCC 7120 / SAG 25.82 / UTEX 2576).